Here is a 220-residue protein sequence, read N- to C-terminus: Small ribosomal subunit protein uS2 (220 aa).

The protein belongs to the universal ribosomal protein uS2 family.

This is Small ribosomal subunit protein uS2 from Methanococcus maripaludis (strain DSM 14266 / JCM 13030 / NBRC 101832 / S2 / LL).